Here is a 126-residue protein sequence, read N- to C-terminus: Fluoride-specific ion channel FluC (126 aa).

The next 4 helical transmembrane spans lie at 6 to 26, 36 to 56, 68 to 88, and 99 to 119; these read FVAV…FAVL, YGTL…VGFF, LLAV…SSEV, and IGML…MLGL. Na(+)-binding residues include Gly-76 and Thr-79.

The protein belongs to the fluoride channel Fluc/FEX (TC 1.A.43) family.

The protein resides in the cell inner membrane. It carries out the reaction fluoride(in) = fluoride(out). Na(+) is not transported, but it plays an essential structural role and its presence is essential for fluoride channel function. Its function is as follows. Fluoride-specific ion channel. Important for reducing fluoride concentration in the cell, thus reducing its toxicity. This is Fluoride-specific ion channel FluC from Ralstonia nicotianae (strain ATCC BAA-1114 / GMI1000) (Ralstonia solanacearum).